The chain runs to 394 residues: Elongation factor Tu (394 aa).

One can recognise a tr-type G domain in the interval 10–204; the sequence is KPHINVGTIG…ALDNYIPEPK (195 aa). Residues 19-26 are G1; that stretch reads GHVDHGKT. Residue 19 to 26 coordinates GTP; that stretch reads GHVDHGKT. Mg(2+) is bound at residue T26. The segment at 60 to 64 is G2; that stretch reads GITIN. The tract at residues 81-84 is G3; it reads DCPG. Residues 81–85 and 136–139 contribute to the GTP site; these read DCPGH and NKCD. The interval 136-139 is G4; sequence NKCD. The G5 stretch occupies residues 174 to 176; it reads SAL.

Belongs to the TRAFAC class translation factor GTPase superfamily. Classic translation factor GTPase family. EF-Tu/EF-1A subfamily. In terms of assembly, monomer.

It localises to the cytoplasm. The catalysed reaction is GTP + H2O = GDP + phosphate + H(+). GTP hydrolase that promotes the GTP-dependent binding of aminoacyl-tRNA to the A-site of ribosomes during protein biosynthesis. In Blochmanniella pennsylvanica (strain BPEN), this protein is Elongation factor Tu.